The sequence spans 509 residues: uncharacterized protein (509 aa).

The next 13 membrane-spanning stretches (helical) occupy residues 14 to 34 (SAFT…WVIP), 117 to 137 (TIEA…IGVI), 158 to 178 (EFFI…TCGI), 188 to 208 (ILVP…GAIF), 209 to 229 (LAAS…VIAS), 240 to 260 (IGFR…YLYW), 303 to 323 (LILT…MVGG), 324 to 344 (WWFP…MFIS), 359 to 379 (ASEL…NLVL), 399 to 419 (MPGS…GLIV), 423 to 443 (SGLA…VGIP), 458 to 478 (MLFL…QIPF), and 484 to 504 (FVMP…VVQV).

This sequence to E.coli YfcC. To B.subtilis YcgA.

It is found in the cell membrane. This is an uncharacterized protein from Haemophilus influenzae (strain ATCC 51907 / DSM 11121 / KW20 / Rd).